We begin with the raw amino-acid sequence, 406 residues long: Multifunctional CCA protein (406 aa).

Residues Gly8 and Arg11 each contribute to the ATP site. CTP is bound by residues Gly8 and Arg11. The Mg(2+) site is built by Glu21 and Asp23. 3 residues coordinate ATP: Arg91, Arg137, and Arg140. 3 residues coordinate CTP: Arg91, Arg137, and Arg140. One can recognise an HD domain in the interval Thr225–Phe326.

The protein belongs to the tRNA nucleotidyltransferase/poly(A) polymerase family. Bacterial CCA-adding enzyme type 1 subfamily. As to quaternary structure, monomer. Can also form homodimers and oligomers. Requires Mg(2+) as cofactor. The cofactor is Ni(2+).

It carries out the reaction a tRNA precursor + 2 CTP + ATP = a tRNA with a 3' CCA end + 3 diphosphate. The enzyme catalyses a tRNA with a 3' CCA end + 2 CTP + ATP = a tRNA with a 3' CCACCA end + 3 diphosphate. Its function is as follows. Catalyzes the addition and repair of the essential 3'-terminal CCA sequence in tRNAs without using a nucleic acid template. Adds these three nucleotides in the order of C, C, and A to the tRNA nucleotide-73, using CTP and ATP as substrates and producing inorganic pyrophosphate. tRNA 3'-terminal CCA addition is required both for tRNA processing and repair. Also involved in tRNA surveillance by mediating tandem CCA addition to generate a CCACCA at the 3' terminus of unstable tRNAs. While stable tRNAs receive only 3'-terminal CCA, unstable tRNAs are marked with CCACCA and rapidly degraded. This chain is Multifunctional CCA protein, found in Nitrosococcus oceani (strain ATCC 19707 / BCRC 17464 / JCM 30415 / NCIMB 11848 / C-107).